The chain runs to 204 residues: N-(5'-phosphoribosyl)anthranilate isomerase (204 aa).

The protein belongs to the TrpF family.

It carries out the reaction N-(5-phospho-beta-D-ribosyl)anthranilate = 1-(2-carboxyphenylamino)-1-deoxy-D-ribulose 5-phosphate. It functions in the pathway amino-acid biosynthesis; L-tryptophan biosynthesis; L-tryptophan from chorismate: step 3/5. This chain is N-(5'-phosphoribosyl)anthranilate isomerase, found in Bacillus cereus (strain B4264).